The chain runs to 415 residues: Polyadenylate-binding protein RBP45C (415 aa).

The interval 1-77 (MMQQPPPASN…GGSQNPGSAG (77 aa)) is disordered. Low complexity predominate over residues 23–64 (QQAYLQQQQSWMMQHQQQQQGQPPAGWNQQSAPSSGQPQQQQ). RRM domains are found at residues 80–160 (RSLW…WAQL), 173–252 (HTVF…PAAN), and 278–350 (TTIF…WGRS). Residues 344–356 (RLSWGRSPSNKQT) show a composition bias toward polar residues. Residues 344–369 (RLSWGRSPSNKQTQPDQAQYGGGGGY) form a disordered region.

This sequence belongs to the polyadenylate-binding RBP45 family. In terms of assembly, interacts with the poly(A) tail of mRNA in nucleus. Mostly expressed in seedlings and stems, and, to a lower extent, in leaves and flowers.

Its subcellular location is the nucleus. Its function is as follows. Heterogeneous nuclear ribonucleoprotein (hnRNP)-protein binding the poly(A) tail of mRNA and probably involved in some steps of pre-mRNA maturation. This Arabidopsis thaliana (Mouse-ear cress) protein is Polyadenylate-binding protein RBP45C (RBP45C).